The chain runs to 501 residues: UDP-N-acetylmuramoyl-L-alanyl-D-glutamate--2,6-diaminopimelate ligase (501 aa).

UDP-N-acetyl-alpha-D-muramoyl-L-alanyl-D-glutamate is bound by residues Leu-26, Ser-28, and 43–45 (HQC). Position 123-129 (123-129 (GTNGKTT)) interacts with ATP. Residues Asn-164, 165–166 (TT), Ser-192, Gln-198, and Arg-200 each bind UDP-N-acetyl-alpha-D-muramoyl-L-alanyl-D-glutamate. Lys-232 carries the post-translational modification N6-carboxylysine. Meso-2,6-diaminopimelate is bound by residues Arg-398, 422 to 425 (DNPR), Gly-473, and Glu-477. The Meso-diaminopimelate recognition motif signature appears at 422–425 (DNPR).

The protein belongs to the MurCDEF family. MurE subfamily. Mg(2+) serves as cofactor. Carboxylation is probably crucial for Mg(2+) binding and, consequently, for the gamma-phosphate positioning of ATP.

Its subcellular location is the cytoplasm. It carries out the reaction UDP-N-acetyl-alpha-D-muramoyl-L-alanyl-D-glutamate + meso-2,6-diaminopimelate + ATP = UDP-N-acetyl-alpha-D-muramoyl-L-alanyl-gamma-D-glutamyl-meso-2,6-diaminopimelate + ADP + phosphate + H(+). Its pathway is cell wall biogenesis; peptidoglycan biosynthesis. Catalyzes the addition of meso-diaminopimelic acid to the nucleotide precursor UDP-N-acetylmuramoyl-L-alanyl-D-glutamate (UMAG) in the biosynthesis of bacterial cell-wall peptidoglycan. The polypeptide is UDP-N-acetylmuramoyl-L-alanyl-D-glutamate--2,6-diaminopimelate ligase (Haemophilus ducreyi (strain 35000HP / ATCC 700724)).